Consider the following 212-residue polypeptide: Urease accessory protein UreG (212 aa).

A GTP-binding site is contributed by 19–26; sequence GPVGSGKT.

The protein belongs to the SIMIBI class G3E GTPase family. UreG subfamily. Homodimer. UreD, UreF and UreG form a complex that acts as a GTP-hydrolysis-dependent molecular chaperone, activating the urease apoprotein by helping to assemble the nickel containing metallocenter of UreC. The UreE protein probably delivers the nickel.

It is found in the cytoplasm. Functionally, facilitates the functional incorporation of the urease nickel metallocenter. This process requires GTP hydrolysis, probably effectuated by UreG. This Vibrio parahaemolyticus protein is Urease accessory protein UreG.